The chain runs to 58 residues: UPF0391 membrane protein Sbal195_1447 (58 aa).

2 consecutive transmembrane segments (helical) span residues 6–26 (LVFL…IAGA) and 28–48 (AGIA…SLLV).

This sequence belongs to the UPF0391 family.

The protein resides in the cell membrane. The chain is UPF0391 membrane protein Sbal195_1447 from Shewanella baltica (strain OS195).